The following is a 309-amino-acid chain: NAD kinase (309 aa).

The active-site Proton acceptor is the Asp-89. NAD(+)-binding positions include 89 to 90, 163 to 164, His-174, Arg-191, Asp-193, and 204 to 209; these read DG, NE, and TAYSLS.

This sequence belongs to the NAD kinase family. Requires a divalent metal cation as cofactor.

It localises to the cytoplasm. It catalyses the reaction NAD(+) + ATP = ADP + NADP(+) + H(+). Its function is as follows. Involved in the regulation of the intracellular balance of NAD and NADP, and is a key enzyme in the biosynthesis of NADP. Catalyzes specifically the phosphorylation on 2'-hydroxyl of the adenosine moiety of NAD to yield NADP. This chain is NAD kinase, found in Shewanella piezotolerans (strain WP3 / JCM 13877).